A 190-amino-acid polypeptide reads, in one-letter code: Orotate phosphoribosyltransferase (190 aa).

Residues arginine 101, lysine 102, lysine 105, histidine 107, and 128 to 136 (EDVVTTGGS) contribute to the 5-phospho-alpha-D-ribose 1-diphosphate site. Orotate-binding residues include threonine 132 and arginine 160.

It belongs to the purine/pyrimidine phosphoribosyltransferase family. PyrE subfamily. Homodimer. Mg(2+) is required as a cofactor.

The enzyme catalyses orotidine 5'-phosphate + diphosphate = orotate + 5-phospho-alpha-D-ribose 1-diphosphate. It functions in the pathway pyrimidine metabolism; UMP biosynthesis via de novo pathway; UMP from orotate: step 1/2. Its function is as follows. Catalyzes the transfer of a ribosyl phosphate group from 5-phosphoribose 1-diphosphate to orotate, leading to the formation of orotidine monophosphate (OMP). The sequence is that of Orotate phosphoribosyltransferase from Synechococcus sp. (strain CC9605).